Here is a 538-residue protein sequence, read N- to C-terminus: BTB/POZ domain-containing protein 6 (538 aa).

The first 17 residues, M1 to T17, serve as a signal peptide directing secretion. 2 disordered regions span residues P29–K53 and A76–W115. The segment covering A35–K53 has biased composition (low complexity). A compositionally biased stretch (pro residues) spans R85 to P103. The 71-residue stretch at A136 to A206 folds into the BTB domain.

In terms of tissue distribution, expressed in lens.

It localises to the cytoplasm. Functionally, adapter protein for the cul3 E3 ubiquitin-protein ligase complex. Involved in late neuronal development and muscle formation. This is BTB/POZ domain-containing protein 6 from Homo sapiens (Human).